The sequence spans 318 residues: Beta-galactosidase small subunit (318 aa).

This sequence belongs to the bacterial beta-galactosidase small subunit family. As to quaternary structure, heterodimer of a large (LacL) and a small subunit (LacM).

The catalysed reaction is Hydrolysis of terminal non-reducing beta-D-galactose residues in beta-D-galactosides.. In terms of biological role, component of a beta-galactosidase. This is Beta-galactosidase small subunit from Latilactobacillus sakei (Lactobacillus sakei).